Here is a 500-residue protein sequence, read N- to C-terminus: L-arabinose isomerase (500 aa).

4 residues coordinate Mn(2+): glutamate 306, glutamate 333, histidine 350, and histidine 450.

This sequence belongs to the arabinose isomerase family. In terms of assembly, homohexamer. The cofactor is Mn(2+).

The catalysed reaction is beta-L-arabinopyranose = L-ribulose. It participates in carbohydrate degradation; L-arabinose degradation via L-ribulose; D-xylulose 5-phosphate from L-arabinose (bacterial route): step 1/3. Functionally, catalyzes the conversion of L-arabinose to L-ribulose. In Escherichia coli O157:H7, this protein is L-arabinose isomerase.